We begin with the raw amino-acid sequence, 309 residues long: Tagatose-6-phosphate kinase 1 (309 aa).

The protein belongs to the carbohydrate kinase PfkB family. LacC subfamily.

The catalysed reaction is D-tagatofuranose 6-phosphate + ATP = D-tagatofuranose 1,6-bisphosphate + ADP + H(+). It participates in carbohydrate metabolism; D-tagatose 6-phosphate degradation; D-glyceraldehyde 3-phosphate and glycerone phosphate from D-tagatose 6-phosphate: step 1/2. The polypeptide is Tagatose-6-phosphate kinase 1 (Streptococcus agalactiae serotype III (strain NEM316)).